The following is a 120-amino-acid chain: uncharacterized protein (120 aa).

Residues 1 to 27 form the signal peptide; sequence MPKIGVSLIVLIMLIIFLAGCNKNEQN.

This is an uncharacterized protein from Bacillus subtilis (strain 168).